A 248-amino-acid chain; its full sequence is 1,2-phenylacetyl-CoA epoxidase, subunit C (248 aa).

Residues 76 to 79 (QFSN) and 177 to 179 (IAL) each bind substrate.

Forms a stable heterotetramer (dimer of heterodimers) with PaaA and a stable heterodimer with PaaB.

It functions in the pathway aromatic compound metabolism; phenylacetate degradation. In terms of biological role, component of 1,2-phenylacetyl-CoA epoxidase multicomponent enzyme system which catalyzes the reduction of phenylacetyl-CoA (PA-CoA) to form 1,2-epoxyphenylacetyl-CoA. The subunit C may be essential for structural integrity of the alpha subunit. The sequence is that of 1,2-phenylacetyl-CoA epoxidase, subunit C (paaC) from Escherichia coli (strain K12).